The primary structure comprises 439 residues: Paraneoplastic antigen-like protein 8A (439 aa).

Residues 208–439 (SALKAETPNN…RRATNESRKV (232 aa)) form a disordered region. A compositionally biased stretch (basic residues) spans 231-249 (LVRRAGAKSRSRRKKQKKN). 3 stretches are compositionally biased toward basic and acidic residues: residues 314-326 (GPREPPQDARAEA), 395-404 (SRREASDQKA), and 423-439 (AKPEGSPRRATNESRKV).

Belongs to the PNMA family.

The chain is Paraneoplastic antigen-like protein 8A from Homo sapiens (Human).